Reading from the N-terminus, the 203-residue chain is Glycerol-3-phosphate acyltransferase (203 aa).

A run of 4 helical transmembrane segments spans residues M1–I21, W84–G104, I117–I137, and L157–L179.

This sequence belongs to the PlsY family. Probably interacts with PlsX.

Its subcellular location is the cell inner membrane. It carries out the reaction an acyl phosphate + sn-glycerol 3-phosphate = a 1-acyl-sn-glycero-3-phosphate + phosphate. It functions in the pathway lipid metabolism; phospholipid metabolism. In terms of biological role, catalyzes the transfer of an acyl group from acyl-phosphate (acyl-PO(4)) to glycerol-3-phosphate (G3P) to form lysophosphatidic acid (LPA). This enzyme utilizes acyl-phosphate as fatty acyl donor, but not acyl-CoA or acyl-ACP. This Synechococcus sp. (strain CC9605) protein is Glycerol-3-phosphate acyltransferase.